Here is a 581-residue protein sequence, read N- to C-terminus: MSKDLDKEDVLYKKRHSIAHVMAEAVRDLFPNTKIAIGPPIKDGFYYDFEFKKQITEDSLLDIENRMREILKTGSSFEKELISVEQALEIFKDEPYKIDLIKNFDLQNEISIYKSHNFIDLCRGPHVDNMNKIDPKAFKLTSIAGAYWRGNEKNTMLTRIYGTLWNNEKELRSYLNLREEIKKRDHRKLGKELDLFSIHEEIGPGLVFFHPNGAKIRALIEDFWREEHSKNGYDILFTPHIGKSWLWQTSGHLDFYKDSMFEKMEMDKSDYYLKPMNCPFHIAIYNTGKHSYRDLPFRWAELGTVYRYEKIGALHGIMRARGFTQDDAHIICTHSQVLDEIKEVLRFAIYMWSKFGFNSLKAYLSTKPDKFVGNDSDWEMSLKVLEEALSGFEVPYEIDKGGGAFYGPKIDLKIVDSLEREWQMSTIQFDFNLPERFNMTYTAEDGKEKRPFMIHRALLGSIERFFGILIEHYGGAFPLWLSPIQAVIIPVNNAVEDYAIKVFNKFKNEGMRIKLDNTSSRMNAKIREYQAKKIPYMFIIGEREAKEEKISIRTRTNEQINGLELDEALKLILLKIRDKEI.

Residues 185–478 form a catalytic region; sequence DHRKLGKELD…LIEHYGGAFP (294 aa). The Zn(2+) site is built by Cys-278, His-329, and His-455.

This sequence belongs to the class-II aminoacyl-tRNA synthetase family. As to quaternary structure, homodimer. It depends on Zn(2+) as a cofactor.

It localises to the cytoplasm. It carries out the reaction tRNA(Thr) + L-threonine + ATP = L-threonyl-tRNA(Thr) + AMP + diphosphate + H(+). Catalyzes the attachment of threonine to tRNA(Thr) in a two-step reaction: L-threonine is first activated by ATP to form Thr-AMP and then transferred to the acceptor end of tRNA(Thr). Also edits incorrectly charged L-seryl-tRNA(Thr). The sequence is that of Threonine--tRNA ligase from Borreliella afzelii (strain PKo) (Borrelia afzelii).